A 1088-amino-acid polypeptide reads, in one-letter code: RNA-directed RNA polymerase (1088 aa).

Residues leucine 501–isoleucine 687 form the RdRp catalytic domain.

The protein belongs to the reoviridae RNA-directed RNA polymerase family. Interacts with VP3 (Potential). Interacts with VP2; this interaction activates VP1. Interacts with NSP5; this interaction is probably necessary for the formation of functional virus factories. Interacts with NSP2; this interaction is weak. The cofactor is Mg(2+).

It localises to the virion. It carries out the reaction RNA(n) + a ribonucleoside 5'-triphosphate = RNA(n+1) + diphosphate. Functionally, RNA-directed RNA polymerase that is involved in both transcription and genome replication. Together with VP3 capping enzyme, forms an enzyme complex positioned near the channels situated at each of the five-fold vertices of the core. Following infection, the outermost layer of the virus is lost, leaving a double-layered particle (DLP) made up of the core and VP6 shell. VP1 then catalyzes the transcription of fully conservative plus-strand genomic RNAs that are extruded through the DLP's channels into the cytoplasm where they function as mRNAs for translation of viral proteins. One copy of each of the viral (+)RNAs is also recruited during core assembly, together with newly synthesized polymerase complexes and VP2. The polymerase of these novo-formed particles catalyzes the synthesis of complementary minus-strands leading to dsRNA formation. To do so, the polymerase specifically recognizes and binds 4 bases 5'-UGUG-3' in the conserved 3'-sequence of plus-strand RNA templates. VP2 presumably activates the autoinhibited VP1-RNA complex to coordinate packaging and genome replication. Once dsRNA synthesis is complete, the polymerase switches to the transcriptional mode, thus providing secondary transcription. The chain is RNA-directed RNA polymerase from Rotavirus A (strain RVA/Cow/United States/NCDV-Lincoln/1969/G6P6[1]) (RV-A).